Reading from the N-terminus, the 235-residue chain is uncharacterized protein (235 aa).

2 disordered regions span residues 1–47 and 78–128; these read MSHK…QSTN and QEHH…KQPQ. The span at 20 to 33 shows a compositional bias: polar residues; it reads HPPGQSLSSISWSP. The span at 84 to 98 shows a compositional bias: low complexity; sequence QQQQQQRQNIRSQNS. A compositionally biased stretch (polar residues) spans 106–128; the sequence is VQESQWTSSASNSSLKKQEKQPQ.

This is an uncharacterized protein from Saccharomyces cerevisiae (strain ATCC 204508 / S288c) (Baker's yeast).